The following is a 393-amino-acid chain: Probable alpha-1,6-mannosyltransferase MNN10 (393 aa).

At 1 to 52 (MSSVPYNSQLPISNHLEYDEDEKKSRGSKLGLKYKMIYWRKTLCSSLARWRK) the chain is on the cytoplasmic side. The helical; Signal-anchor for type II membrane protein transmembrane segment at 53–73 (LILLISLALFLFIWISDSTIS) threads the bilayer. Over 74–393 (RNPSTTSFQG…RKWYTRFFFP (320 aa)) the chain is Lumenal. Residues 77–97 (STTSFQGQNSNDNKLSNTGSS) are disordered.

This sequence belongs to the glycosyltransferase 34 family. As to quaternary structure, component of the M-Pol II complex composed of ANP1, MNN9, MNN10, MNN11 and HOC1.

Its subcellular location is the endoplasmic reticulum membrane. The protein localises to the golgi apparatus. The protein resides in the cis-Golgi network membrane. Functionally, required for polarized growth and efficient budding. The M-Pol II complex possesses alpha-1,6-mannosyltransferase activity and is probably involved in the elongation of the mannan backbone of N-linked glycans on cell wall and periplasmic proteins. The chain is Probable alpha-1,6-mannosyltransferase MNN10 (MNN10) from Saccharomyces cerevisiae (strain ATCC 204508 / S288c) (Baker's yeast).